Consider the following 359-residue polypeptide: Protein PAM71-homolog, chloroplastic (359 aa).

The N-terminal 66 residues, 1 to 66 (MKLTSLSKNA…DLLWGKFRVR (66 aa)), are a transit peptide targeting the chloroplast. The disordered stretch occupies residues 71–102 (GVGSGSYSGGEEDGSQSSSLDQSPATSSESLK). The segment covering 85-98 (SQSSSLDQSPATSS) has biased composition (low complexity). 7 consecutive transmembrane segments (helical) span residues 110 to 130 (SLSI…ITFV), 149 to 169 (AFSL…AALL), 177 to 197 (LVLL…VVIG), 207 to 227 (FQTT…FFGL), 269 to 289 (LTNP…AEWG), 311 to 331 (GAIA…AFLA), and 339 to 359 (VGYV…FGVF).

It belongs to the GDT1 family.

The protein resides in the plastid. It localises to the chloroplast membrane. Functionally, probable chloroplast-localized Mn(2+)/H(+) and/or Ca(2+)/H(+) antiporter regulating Ca(2+), Mn(2+) and pH homeostasis. This is Protein PAM71-homolog, chloroplastic from Arabidopsis thaliana (Mouse-ear cress).